Reading from the N-terminus, the 403-residue chain is Putative F-box protein At5g41500 (403 aa).

An F-box domain is found at 2-47 (ATTISNLPRELIEEILSRVPLRAMKAMRLTCKSWNNLSKSESFMKM).

The sequence is that of Putative F-box protein At5g41500 from Arabidopsis thaliana (Mouse-ear cress).